The following is a 55-amino-acid chain: Small integral membrane protein 27 (55 aa).

Residues 11–31 (WIYSVLLLAIVLISWGCIIYA) form a helical membrane-spanning segment.

It is found in the membrane. This is Small integral membrane protein 27 from Homo sapiens (Human).